Consider the following 125-residue polypeptide: Cystatin-like cysteine protease inhibitor EPIC2B (125 aa).

The N-terminal stretch at 1-21 (MSFLRPTLALLAVTALVTTSG) is a signal peptide. N-linked (GlcNAc...) asparagine glycosylation occurs at asparagine 45. The short motif at 68–72 (QVVSG) is the Secondary area of contact element.

Belongs to the cystatin family. Interacts with the host papain-like cysteine protease PIP1. Interacts with the host papain-like cysteine protease RCR3. Interacts with the host papain-like cysteine protease C14.

It localises to the secreted. Functionally, secreted effector that interacts with and inhibits the pathogenesis-related papain-like cysteine proteases C14, PIP1 and RCR3 of host plants. Inhibition of host proteases by a pathogen extracellular protease inhibitor forms a specific type of defense-counterdefense mechanism between plants and microbial pathogens. In Phytophthora infestans (Potato late blight agent), this protein is Cystatin-like cysteine protease inhibitor EPIC2B.